Here is a 24-residue protein sequence, read N- to C-terminus: Ascaphin-5 (24 aa).

As to expression, expressed by the skin glands.

The protein localises to the secreted. In terms of biological role, antimicrobial peptide. Synthetic peptide shows higher potency against Gram-negative bacteria than against Gram-positive bacteria. Has a very week hemolytic activity. This Ascaphus truei (Coastal tailed frog) protein is Ascaphin-5.